The following is a 194-amino-acid chain: Fibroblast growth factor 7 (194 aa).

The first 31 residues, M1–A31, serve as a signal peptide directing secretion. Residue N45 is glycosylated (N-linked (GlcNAc...) asparagine).

It belongs to the heparin-binding growth factors family. In terms of assembly, interacts with FGFBP1. Interacts with FGFR2. Affinity between fibroblast growth factors (FGFs) and their receptors is increased by heparan sulfate glycosaminoglycans that function as coreceptors.

The protein localises to the secreted. Its function is as follows. Plays an important role in the regulation of embryonic development, cell proliferation and cell differentiation. Required for normal branching morphogenesis. Growth factor active on keratinocytes. Possible major paracrine effector of normal epithelial cell proliferation. The sequence is that of Fibroblast growth factor 7 (FGF7) from Cervus elaphus (Red deer).